The following is a 184-amino-acid chain: Protein MEH1 (184 aa).

G2 carries the N-myristoyl glycine lipid modification. 2 S-palmitoyl cysteine lipidation sites follow: C7 and C8. Residues 30-71 adopt a coiled-coil conformation; the sequence is QGNANDEYDAEQMRLKEHEHEQKLLAREQELRDIVANTNDKL. Residues 89–147 form a disordered region; it reads LQEALDKRQQEEGGDSREDERSAGDDNLSGHSVPSSGSAQATTHQTAPRTNTFTLLTSP. Over residues 92-112 the composition is skewed to basic and acidic residues; sequence ALDKRQQEEGGDSREDERSAG. Residues 117-147 are compositionally biased toward polar residues; that stretch reads SGHSVPSSGSAQATTHQTAPRTNTFTLLTSP. Phosphoserine is present on residues S146 and S149.

As to quaternary structure, component of the GSE complex composed of GTR1, GTR2, SLM4, MEH1 and LTV1. Component of the EGO complex, at least composed of GTR2, SLM4 and MEH1.

The protein resides in the vacuole membrane. Component of the GSE complex, a GTPase complex required for intracellular sorting of GAP1 out of the endosome. Component of the EGO complex, a complex involved in the regulation of microautophagy. The polypeptide is Protein MEH1 (MEH1) (Saccharomyces cerevisiae (strain ATCC 204508 / S288c) (Baker's yeast)).